A 279-amino-acid polypeptide reads, in one-letter code: Zinc finger CCCH domain-containing protein 1 (279 aa).

Positions 20 to 45 are disordered; that stretch reads DVIVLSPGPPARRRPPPVKAVEPESG. 2 C3H1-type zinc fingers span residues 56–84 and 139–167; these read FYKT…HGDE and RAIT…HVSA.

This chain is Zinc finger CCCH domain-containing protein 1, found in Oryza sativa subsp. japonica (Rice).